A 484-amino-acid polypeptide reads, in one-letter code: uncharacterized protein (484 aa).

Low complexity predominate over residues 1–14; it reads MIDSTSTATATSKT. The tract at residues 1 to 32 is disordered; it reads MIDSTSTATATSKTVELNTNGSKTDASSENGT. Positions 15 to 32 are enriched in polar residues; sequence VELNTNGSKTDASSENGT. The residue at position 305 (Lys305) is an N6-(pyridoxal phosphate)lysine.

This sequence belongs to the class-III pyridoxal-phosphate-dependent aminotransferase family. It depends on pyridoxal 5'-phosphate as a cofactor.

This is an uncharacterized protein from Schizosaccharomyces pombe (strain 972 / ATCC 24843) (Fission yeast).